We begin with the raw amino-acid sequence, 411 residues long: Lissencephaly-1 homolog (411 aa).

Residues 9–41 form the LisH domain; sequence QREELNQAIADYLGSNGYADSLETFRKEADLST. Residues 56–83 are a coiled coil; the sequence is TSVIRLQKKVMDLEAKLTEAEKEVIEGA. 7 WD repeats span residues 106-147, 148-187, 191-230, 233-272, 275-334, 337-376, and 379-411; these read GHRA…RSLK, GHTD…ECVK, GHDH…CVKT, GHRE…CKVE, DHEH…CLLT, GHDN…CMKT, and AHQH…WECR.

The protein belongs to the WD repeat LIS1/nudF family.

It localises to the cytoplasm. It is found in the cytoskeleton. Its subcellular location is the microtubule organizing center. The protein localises to the centrosome. Positively regulates the activity of the minus-end directed microtubule motor protein dynein. May enhance dynein-mediated microtubule sliding by targeting dynein to the microtubule plus end. Required for several dynein- and microtubule-dependent processes. This chain is Lissencephaly-1 homolog, found in Drosophila mojavensis (Fruit fly).